The chain runs to 351 residues: 3-dehydroquinate synthase (351 aa).

NAD(+) is bound by residues T126–T127, K138, and K147. Positions 180, 244, and 260 each coordinate Zn(2+).

It belongs to the sugar phosphate cyclases superfamily. Dehydroquinate synthase family. Co(2+) serves as cofactor. Zn(2+) is required as a cofactor. It depends on NAD(+) as a cofactor.

It is found in the cytoplasm. It carries out the reaction 7-phospho-2-dehydro-3-deoxy-D-arabino-heptonate = 3-dehydroquinate + phosphate. It participates in metabolic intermediate biosynthesis; chorismate biosynthesis; chorismate from D-erythrose 4-phosphate and phosphoenolpyruvate: step 2/7. Catalyzes the conversion of 3-deoxy-D-arabino-heptulosonate 7-phosphate (DAHP) to dehydroquinate (DHQ). The protein is 3-dehydroquinate synthase of Exiguobacterium sp. (strain ATCC BAA-1283 / AT1b).